The chain runs to 334 residues: Ferrochelatase 1 (334 aa).

Positions 201 and 282 each coordinate Fe cation.

It belongs to the ferrochelatase family.

The protein resides in the cytoplasm. It catalyses the reaction heme b + 2 H(+) = protoporphyrin IX + Fe(2+). The protein operates within porphyrin-containing compound metabolism; protoheme biosynthesis; protoheme from protoporphyrin-IX: step 1/1. Catalyzes the ferrous insertion into protoporphyrin IX. In Shewanella oneidensis (strain ATCC 700550 / JCM 31522 / CIP 106686 / LMG 19005 / NCIMB 14063 / MR-1), this protein is Ferrochelatase 1.